The following is a 365-amino-acid chain: Peridinin-chlorophyll a-binding protein, chloroplastic (365 aa).

A chloroplast-targeting transit peptide spans 1–52; sequence MVRGARKAIAVGVAVAVACGLQKHLNFVPGPRHAAPVAAAAASMMMAPAAFA. Tandem repeats lie at residues 53–215 and 216–365.

In terms of assembly, monomer.

Its subcellular location is the plastid. The protein resides in the chloroplast. Functionally, water-soluble antenna for capture of solar energy in the blue-green range. Peridinin is an asymmetric carotenoid. The chain is Peridinin-chlorophyll a-binding protein, chloroplastic from Symbiodinium sp. (Dinoflagellate).